Here is a 333-residue protein sequence, read N- to C-terminus: Procathepsin L (333 aa).

The N-terminal stretch at 1–17 is a signal peptide; the sequence is MNPTLILAAFCLGIASA. A propeptide spans 18–113 (activation peptide); the sequence is TLTFDHSLEA…KVFQEPLFYE (96 aa). Zn(2+) is bound at residue Glu-122. Cystine bridges form between Cys-135/Cys-178 and Cys-169/Cys-211. Residue Cys-138 is part of the active site. Residues Glu-163, Asp-184, Glu-199, Glu-205, and Glu-209 each contribute to the Zn(2+) site. Residue Asn-221 is glycosylated (N-linked (GlcNAc...) asparagine). 5 residues coordinate Zn(2+): Asp-227, Asp-250, His-253, Asp-273, and Asp-275. Cys-269 and Cys-322 form a disulfide bridge. Residue His-276 is part of the active site. A propeptide spanning residues 289-291 is cleaved from the precursor; it reads ESD. The active site involves Asn-300.

The protein belongs to the peptidase C1 family. In terms of assembly, dimer of a heavy and a light chain linked by disulfide bonds. Interacts with Long isoform of CD74/Ii chain; the interaction stabilizes the conformation of mature CTSL. Post-translationally, during export along the endocytic pathway, pro-CTSL undergoes several proteolytic cleavages to generate the CTSL single-chain and two-chain mature forms, composed of a heavy chain linked to a light chain by disulfide bonds. Autocleavage; produces the single-chain CTSL after cleavage of the propeptide. The cleavage can be intermolecular.

The protein resides in the lysosome. Its subcellular location is the apical cell membrane. It localises to the cytoplasmic vesicle. It is found in the secretory vesicle. The protein localises to the chromaffin granule. The protein resides in the secreted. Its subcellular location is the extracellular space. It localises to the nucleus. The catalysed reaction is Specificity close to that of papain. As compared to cathepsin B, cathepsin L exhibits higher activity toward protein substrates, but has little activity on Z-Arg-Arg-NHMec, and no peptidyl-dipeptidase activity.. Inhibited by the propeptide produced by autocleavage. Long isoform of CD74/Ii chain stabilizes the conformation of mature CTSL by binding to its active site and serving as a chaperone to help maintain a pool of mature enzyme in endocytic compartments and extracellular space of APCs. IFNG enhances the conversion into the CTSL mature and active form. Inhibited by CST6. Inhibited by the glycopeptide antibiotic teicoplanin. Inhibited by amantadine. Its function is as follows. Thiol protease important for the overall degradation of proteins in lysosomes. Plays a critical for normal cellular functions such as general protein turnover, antigen processing and bone remodeling. Involved in the solubilization of cross-linked TG/thyroglobulin and in the subsequent release of thyroid hormone thyroxine (T4) by limited proteolysis of TG/thyroglobulin in the thyroid follicle lumen. In neuroendocrine chromaffin cells secretory vesicles, catalyzes the prohormone proenkephalin processing to the active enkephalin peptide neurotransmitter. In thymus, regulates CD4(+) T cell positive selection by generating the major histocompatibility complex class II (MHCII) bound peptide ligands presented by cortical thymic epithelial cells. Also mediates invariant chain processing in cortical thymic epithelial cells. Major elastin-degrading enzyme at neutral pH. Accumulates as a mature and active enzyme in the extracellular space of antigen presenting cells (APCs) to regulate degradation of the extracellular matrix in the course of inflammation. Secreted form generates endostatin from COL18A1. Critical for cardiac morphology and function. Plays an important role in hair follicle morphogenesis and cycling, as well as epidermal differentiation. Required for maximal stimulation of steroidogenesis by TIMP1. Functionally, (Microbial infection) In cells lacking TMPRSS2 expression, facilitates human coronaviruses SARS-CoV and SARS-CoV-2 infections via a slow acid-activated route with the proteolysis of coronavirus spike (S) glycoproteins in lysosome for entry into host cell. Proteolysis within lysosomes is sufficient to activate membrane fusion by coronaviruses SARS-CoV and EMC (HCoV-EMC) S as well as Zaire ebolavirus glycoproteins. Functions in the regulation of cell cycle progression through proteolytic processing of the CUX1 transcription factor. Translation initiation at downstream start sites allows the synthesis of isoforms that are devoid of a signal peptide and localize to the nucleus where they cleave the CUX1 transcription factor and modify its DNA binding properties. The polypeptide is Procathepsin L (Homo sapiens (Human)).